A 258-amino-acid chain; its full sequence is MENTVVIKCGGSVLDELSPAFFASVKTMREQGMNVVIVHGGGPEIGKMLKQLNVRSEFVNGLRKTTKEVLAVVEMVLSGKVNKQLVTMFKQHGLPAVGISGVDGGLLEAEPIDGIKLGYVGRVTAVRVDLLQTLLAANYIPVISPLGVGRSGQTYNINADTAAGAIAAAIGANQLAFVTNVPGLLQDGTLIGEATAETVEQLLKDGVITGGMIPKVKAALSALSDALPKVMIVSGKTPFYEQGTWHGTTIRKEVGAYL.

Residues 41–42 (GG), Arg63, and Asn156 each bind substrate.

Belongs to the acetylglutamate kinase family. ArgB subfamily.

It is found in the cytoplasm. It carries out the reaction N-acetyl-L-glutamate + ATP = N-acetyl-L-glutamyl 5-phosphate + ADP. Its pathway is amino-acid biosynthesis; L-arginine biosynthesis; N(2)-acetyl-L-ornithine from L-glutamate: step 2/4. Functionally, catalyzes the ATP-dependent phosphorylation of N-acetyl-L-glutamate. This Geobacillus thermodenitrificans (strain NG80-2) protein is Acetylglutamate kinase.